Consider the following 245-residue polypeptide: Chymotrypsin B (245 aa).

Disulfide bonds link Cys-1–Cys-121, Cys-42–Cys-58, Cys-135–Cys-201, Cys-167–Cys-182, and Cys-191–Cys-220. Residues 14–15 (AR) constitute a propeptide that is removed on maturation. Positions 16–243 (IVNGEEAVPH…LRGWVDQILA (228 aa)) constitute a Peptidase S1 domain. Residues His-57 and Asp-101 each act as charge relay system in the active site. Ser-195 serves as the catalytic Charge relay system.

The protein belongs to the peptidase S1 family.

The protein resides in the secreted. It is found in the extracellular space. It carries out the reaction Preferential cleavage: Tyr-|-Xaa, Trp-|-Xaa, Phe-|-Xaa, Leu-|-Xaa.. The chain is Chymotrypsin B from Gadus morhua (Atlantic cod).